Consider the following 210-residue polypeptide: T-cell surface glycoprotein CD8 beta-2 chain (210 aa).

The N-terminal stretch at 1–18 is a signal peptide; that stretch reads MRPRLWLLLAAQLTVLHG. Positions 19 to 132 constitute an Ig-like V-type domain; it reads NSVLQQTPAY…ELTFGKGTQL (114 aa). Residues 19 to 170 are Extracellular-facing; that stretch reads NSVLQQTPAY…ETQKGPLCSP (152 aa). C41 and C116 are joined by a disulfide. A glycan (N-linked (GlcNAc...) asparagine) is linked at N102. A helical membrane pass occupies residues 171–191; that stretch reads VTLGLLVAGVLVLLVSLGVAM. At 192 to 210 the chain is on the cytoplasmic side; it reads HLCCRRRRARLRFMKQFYK.

In general heterodimer of an alpha and a beta chain linked by two disulfide bonds.

It is found in the cell membrane. Identifies cytotoxic/suppressor T-cells that interact with MHC class I bearing targets. CD8 is thought to play a role in the process of T-cell mediated killing. The protein is T-cell surface glycoprotein CD8 beta-2 chain of Homo sapiens (Human).